A 383-amino-acid polypeptide reads, in one-letter code: Chitinase-3-like protein 1 (383 aa).

Positions 1-21 are cleaved as a signal peptide; it reads MGLRASGTGFVVLVLLQSCAA. Residues 22 to 383 form the GH18 domain; the sequence is YKLICYYTSW…SAVKDVLAEV (362 aa). C26 and C51 are joined by a disulfide. A glycan (N-linked (GlcNAc...) asparagine) is linked at N60. Chitin is bound by residues 70–71, 97–100, Y141, 204–207, and R263; these read EW, GGWN, and LTYD. C300 and C364 are joined by a disulfide. Residues 324–338 are important for AKT1 activation and IL8 production; it reads QWVAYDDQESVKNKA. W352 serves as a coordination point for chitin. An N-linked (GlcNAc...) asparagine glycan is attached at N367.

It belongs to the glycosyl hydrolase 18 family. As to quaternary structure, monomer.

The protein localises to the secreted. The protein resides in the extracellular space. It localises to the cytoplasm. It is found in the perinuclear region. Its subcellular location is the endoplasmic reticulum. In terms of biological role, carbohydrate-binding lectin with a preference for chitin. Has no chitinase activity. May play a role in tissue remodeling and in the capacity of cells to respond to and cope with changes in their environment. Plays a role in T-helper cell type 2 (Th2) inflammatory response and IL-13-induced inflammation, regulating allergen sensitization, inflammatory cell apoptosis, dendritic cell accumulation and M2 macrophage differentiation. Facilitates invasion of pathogenic enteric bacteria into colonic mucosa and lymphoid organs. Mediates activation of AKT1 signaling pathway and subsequent IL8 production in colonic epithelial cells. Regulates antibacterial responses in lung by contributing to macrophage bacterial killing, controlling bacterial dissemination and augmenting host tolerance. Also regulates hyperoxia-induced injury, inflammation and epithelial apoptosis in lung. The polypeptide is Chitinase-3-like protein 1 (CHI3L1) (Capra hircus (Goat)).